Reading from the N-terminus, the 207-residue chain is Putative 3-methyladenine DNA glycosylase (207 aa).

It belongs to the DNA glycosylase MPG family.

This Listeria welshimeri serovar 6b (strain ATCC 35897 / DSM 20650 / CCUG 15529 / CIP 8149 / NCTC 11857 / SLCC 5334 / V8) protein is Putative 3-methyladenine DNA glycosylase.